The following is a 234-amino-acid chain: uncharacterized protein (234 aa).

The disordered stretch occupies residues 62-99 (NEESISDLNSDNPGNSEPSDVESFVLSDEDENSEKDFS). Residues 67–79 (SDLNSDNPGNSEP) are compositionally biased toward polar residues.

This is an uncharacterized protein from Acanthamoeba polyphaga (Amoeba).